We begin with the raw amino-acid sequence, 154 residues long: Movement protein (154 aa).

Disordered stretches follow at residues 83–103 and 123–154; these read SSPT…HTRP and WVAT…GRVR.

Belongs to the luteoviruses movement protein family.

Functionally, transports viral genome to neighboring plant cells directly through plasmosdesmata, without any budding. The movement protein allows efficient cell to cell propagation, by bypassing the host cell wall barrier. This chain is Movement protein, found in Barley yellow dwarf virus (isolate MAV) (BYDV).